The following is a 103-amino-acid chain: Cobalt transport protein CbiN (103 aa).

The next 2 membrane-spanning stretches (helical) occupy residues 6 to 26 (VLTNVILLLLVVFITIIPFFV) and 68 to 88 (LLFALQAAIGAGVIGFGLGYL).

It belongs to the CbiN family. As to quaternary structure, forms an energy-coupling factor (ECF) transporter complex composed of an ATP-binding protein (A component, CbiO), a transmembrane protein (T component, CbiQ) and 2 possible substrate-capture proteins (S components, CbiM and CbiN) of unknown stoichimetry.

It localises to the cell membrane. The protein operates within cofactor biosynthesis; adenosylcobalamin biosynthesis. Part of the energy-coupling factor (ECF) transporter complex CbiMNOQ involved in cobalt import. The protein is Cobalt transport protein CbiN of Clostridium perfringens (strain 13 / Type A).